The chain runs to 692 residues: Elongation factor G 2 (692 aa).

Positions 8 to 283 (EKTRNIGIMA…AVIDYMPSPV (276 aa)) constitute a tr-type G domain. GTP is bound by residues 17 to 24 (AHIDAGKT), 81 to 85 (DTPGH), and 135 to 138 (NKMD).

The protein belongs to the TRAFAC class translation factor GTPase superfamily. Classic translation factor GTPase family. EF-G/EF-2 subfamily.

It is found in the cytoplasm. In terms of biological role, catalyzes the GTP-dependent ribosomal translocation step during translation elongation. During this step, the ribosome changes from the pre-translocational (PRE) to the post-translocational (POST) state as the newly formed A-site-bound peptidyl-tRNA and P-site-bound deacylated tRNA move to the P and E sites, respectively. Catalyzes the coordinated movement of the two tRNA molecules, the mRNA and conformational changes in the ribosome. This chain is Elongation factor G 2, found in Syntrophotalea carbinolica (strain DSM 2380 / NBRC 103641 / GraBd1) (Pelobacter carbinolicus).